A 247-amino-acid polypeptide reads, in one-letter code: Cementoblastoma-derived protein 1 (247 aa).

The segment covering 1–28 has biased composition (polar residues); sequence MGTSSTDSQQAGHRRCSTSNTSAENLTC. 2 disordered regions span residues 1–52 and 147–183; these read MGTS…AGQP and EENS…EKVK.

In terms of processing, phosphorylated. N-glycosylated. Expressed by cementoblasts, a subpopulation of periodontal ligament cells and cells located around vessels in periodontium (at protein level).

The protein localises to the cytoplasm. It localises to the nucleus. In terms of biological role, may play a role in development of the periodontium which surrounds and supports the teeth by promoting the differentiation of multi-potent cells from the periodontal ligament into cementoblasts to form the cementum. Binds hydroxyapatite and may promote the biomineralization of the cementum. Also promotes cell proliferation. This Homo sapiens (Human) protein is Cementoblastoma-derived protein 1.